Here is a 68-residue protein sequence, read N- to C-terminus: MINKVINVEGMSCDHCRNAVESALAKLNGVTSAEVDLDKNQVRVDYDENRVSVEQMKEAIEDQGYDVK.

The region spanning 2–68 is the HMA domain; sequence INKVINVEGM…AIEDQGYDVK (67 aa). Cu cation-binding residues include cysteine 13 and cysteine 16.

The protein localises to the cytoplasm. Its function is as follows. Chaperone that serves for the intracellular sequestration and transport of Cu(+). Delivers Cu(+) to the copper-exporting P-type ATPase A (CopA). The sequence is that of Copper chaperone CopZ (copZ) from Staphylococcus haemolyticus (strain JCSC1435).